A 365-amino-acid chain; its full sequence is Peptide chain release factor 2 (365 aa).

The residue at position 252 (Gln-252) is an N5-methylglutamine.

Belongs to the prokaryotic/mitochondrial release factor family. Post-translationally, methylated by PrmC. Methylation increases the termination efficiency of RF2.

The protein localises to the cytoplasm. In terms of biological role, peptide chain release factor 2 directs the termination of translation in response to the peptide chain termination codons UGA and UAA. This is Peptide chain release factor 2 from Aeromonas salmonicida (strain A449).